Reading from the N-terminus, the 136-residue chain is MQRVLLASKIHRATVTQADLHYVGSITIDAELMAAADIVEGEQVHVVDITSGARLVTYAITGTPGSGVIGINGAAAHLISPGNLVIIMSFVHLDEAERADHRANVVHVDADNHIVTIGSDPAQPVPGAADQLVGRV.

Ser-25 functions as the Schiff-base intermediate with substrate; via pyruvic acid in the catalytic mechanism. The residue at position 25 (Ser-25) is a Pyruvic acid (Ser). Residue Thr-57 coordinates substrate. Tyr-58 serves as the catalytic Proton donor. Position 73-75 (73-75) interacts with substrate; sequence GAA.

It belongs to the PanD family. As to quaternary structure, heterooctamer of four alpha and four beta subunits. Requires pyruvate as cofactor. Is synthesized initially as an inactive proenzyme, which is activated by self-cleavage at a specific serine bond to produce a beta-subunit with a hydroxyl group at its C-terminus and an alpha-subunit with a pyruvoyl group at its N-terminus.

It is found in the cytoplasm. It catalyses the reaction L-aspartate + H(+) = beta-alanine + CO2. The protein operates within cofactor biosynthesis; (R)-pantothenate biosynthesis; beta-alanine from L-aspartate: step 1/1. Its function is as follows. Catalyzes the pyruvoyl-dependent decarboxylation of aspartate to produce beta-alanine. This Mycolicibacterium smegmatis (strain ATCC 700084 / mc(2)155) (Mycobacterium smegmatis) protein is Aspartate 1-decarboxylase.